The following is a 689-amino-acid chain: Glycine--tRNA ligase beta subunit (689 aa).

This sequence belongs to the class-II aminoacyl-tRNA synthetase family. In terms of assembly, tetramer of two alpha and two beta subunits.

It is found in the cytoplasm. It carries out the reaction tRNA(Gly) + glycine + ATP = glycyl-tRNA(Gly) + AMP + diphosphate. This is Glycine--tRNA ligase beta subunit from Salmonella choleraesuis (strain SC-B67).